Consider the following 88-residue polypeptide: Otospiralin (88 aa).

The N-terminal stretch at methionine 1–alanine 21 is a signal peptide.

The protein belongs to the otospiralin family. As to expression, ear specific.

It localises to the secreted. Its function is as follows. May be essential for the survival of the neurosensory epithelium of the inner ear. This chain is Otospiralin (OTOS), found in Cavia porcellus (Guinea pig).